Here is a 323-residue protein sequence, read N- to C-terminus: Transmembrane protein 59 (323 aa).

Positions 1 to 35 (MAAPKGSLWVRAQLGLLPLLLLTMALAGGPGTASA) are cleaved as a signal peptide. The Extracellular portion of the chain corresponds to 36 to 238 (EAFDSVLGDT…GFLRCLSLNS (203 aa)). Asparagine 90 carries N-linked (GlcNAc...) asparagine glycosylation. A helical membrane pass occupies residues 239-259 (GWILTMTLVLSVMVLLWICCA). At 260 to 323 (TVATAVEQYV…TKVNLAHSEI (64 aa)) the chain is on the cytoplasmic side. The short motif at 263–281 (TAVEQYVPSEKLSIYGDLE) is the ATG16L1-binding motif element.

The protein belongs to the TMEM59 family. In terms of assembly, interacts with ATG16L1 (via WD repeats). N-glycosylated.

It is found in the late endosome membrane. The protein resides in the lysosome membrane. Its subcellular location is the cell membrane. The protein localises to the golgi apparatus membrane. Its function is as follows. Acts as a regulator of autophagy in response to S.aureus infection by promoting activation of LC3 (MAP1LC3A, MAP1LC3B or MAP1LC3C). Acts by interacting with ATG16L1, leading to promote a functional complex between LC3 and ATG16L1 and promoting LC3 lipidation and subsequent activation of autophagy. Modulates the O-glycosylation and complex N-glycosylation steps occurring during the Golgi maturation of several proteins such as APP, BACE1, SEAP or PRNP. Inhibits APP transport to the cell surface and further shedding. The sequence is that of Transmembrane protein 59 (TMEM59) from Sus scrofa (Pig).